Reading from the N-terminus, the 149-residue chain is Decarboxylase AgnL1 (149 aa).

The EthD domain occupies 30 to 125 (PGMSEEDYRH…VGDHEKFADT (96 aa)).

This sequence belongs to the tpcK family.

It catalyses the reaction atrochrysone carboxylate + H(+) = atrochrysone + CO2. It functions in the pathway secondary metabolite biosynthesis. Decarboxylase; part of the gene cluster that mediates the biosynthesis of agnestins, dihydroxy-xanthone metabolites. The pathway begins with the assembly and cyclization of atrochrysone thioester by the non-reducing polyketide synthase Agnpks1. The atrochrysone carboxyl ACP thioesterase AgnL7 then breaks the thioester bond and releases the atrochrysone carboxylic acid as the first enzyme-free intermediate. The decarboxylase AgnL1 then catalyzes the concerted decarboxylation-elimination required to convert atochrysone carboxylic acid into emodin anthrone, which is further oxidized to emodin by the anthrone oxygenase AgnL2. Emodin then undergoes reduction catalyzed by the oxidoreductase AgnL4 to yield the dihydroquinone tautomer which is the substrate for reduction by the short chain dehydrogenase AgnL6 reduction to produce hydroxyketone, followed by AgnL8 dehydration and likely spontaneous autoxidation to chrysophanol. Baeyer-Villiger oxidation by the oxidase AgnL3 leads to monodictyphenone via cleavage of the C-10/C-10a bond of chrysophanol. Alternative cleavage at the C-4a/C-10 bond of chrysophanol also leads to the formation some cephalone F. Further conversion to agnestins A and B, requires reduction to dihydro-monodictyphenone, oxidation to agnestin C probably via an epoxide, and rearrangement to either agnestin A or agnestin B directly, although agnestin A or agnestin B can also interconvert. Within the cluster, AgnR1 is the only unassigned oxidoreductase present which could be involved in this conversion. However, AgnR1 seems not to be involved in this step, and thus genes involved in the proposed oxidation/reduction may be located elsewhere on the genome. Further agnestin A derivatives are probably formed by spontaneous decarboxylations, dehydrations and methanolysis reactions. This Paecilomyces divaricatus (Penicillium divaricatum) protein is Decarboxylase AgnL1.